Consider the following 454-residue polypeptide: Notoamide E oxidase notB (454 aa).

A helical transmembrane segment spans residues 15–35 (SPAELTVIIVGLGIAGLTAAI). E48 and G61 together coordinate FAD. N75 is a glycosylation site (N-linked (GlcNAc...) asparagine). R121 serves as a coordination point for FAD. Catalysis depends on residues R199 and Y229. Positions 322 and 335 each coordinate FAD.

It belongs to the paxM FAD-dependent monooxygenase family. Requires FAD as cofactor.

The protein resides in the membrane. It catalyses the reaction notoamide E + NADPH + O2 + H(+) = notoamide C + NADP(+) + H2O. The enzyme catalyses notoamide E + NADPH + O2 + H(+) = notoamide D + NADP(+) + H2O. Its pathway is alkaloid biosynthesis. In terms of biological role, FAD-dependent monooxygenase; part of the gene cluster that mediates the biosynthesis of notoamide, a fungal indole alkaloid that belongs to a family of natural products containing a characteristic bicyclo[2.2.2]diazaoctane core. The first step of notoamide biosynthesis involves coupling of L-proline and L-tryptophan by the bimodular NRPS notE, to produce cyclo-L-tryptophan-L-proline called brevianamide F. The reverse prenyltransferase notF then acts as a deoxybrevianamide E synthase and converts brevianamide F to deoxybrevianamide E via reverse prenylation at C-2 of the indole ring leading to the bicyclo[2.2.2]diazaoctane core. Deoxybrevianamide E is further hydroxylated at C-6 of the indole ring, likely catalyzed by the cytochrome P450 monooxygenase notG, to yield 6-hydroxy-deoxybrevianamide E. 6-hydroxy-deoxybrevianamide E is a specific substrate of the prenyltransferase notC for normal prenylation at C-7 to produce 6-hydroxy-7-prenyl-deoxybrevianamide, also called notoamide S. As the proposed pivotal branching point in notoamide biosynthesis, notoamide S can be diverted to notoamide E through an oxidative pyran ring closure putatively catalyzed by either notH cytochrome P450 monooxygenase or the notD FAD-linked oxidoreductase. This step would be followed by an indole 2,3-epoxidation-initiated pinacol-like rearrangement catalyzed by the notB FAD-dependent monooxygenase leading to the formation of notoamide C and notoamide D. On the other hand notoamide S is converted to notoamide T by notH (or notD), a bifunctional oxidase that also functions as the intramolecular Diels-Alderase responsible for generation of (+)-notoamide T. To generate antipodal (-)-notoaminide T, notH' (or notD') in Aspergillus versicolor is expected to catalyze a Diels-Alder reaction leading to the opposite stereochemistry. The remaining oxidoreductase notD (or notH) likely catalyzes the oxidative pyran ring formation to yield (+)-stephacidin A. The FAD-dependent monooxygenase notI is highly similar to notB and is predicted to catalyze a similar conversion from (+)-stephacidin A to (-)-notoamide B via the 2,3-epoxidation of (+)-stephacidin A followed by a pinacol-type rearrangement. Finally, it remains unclear which enzyme could be responsible for the final hydroxylation steps leading to notoamide A and sclerotiamide. The polypeptide is Notoamide E oxidase notB (Aspergillus sp. (strain MF297-2)).